The chain runs to 571 residues: Transcription factor ABORTED MICROSPORES (571 aa).

Over residues N275–R284 the composition is skewed to basic and acidic residues. Disordered regions lie at residues N275 to R321, E365 to N390, and D536 to Q571. The region spanning G310 to L359 is the bHLH domain. Acidic residues predominate over residues D368–D378. A compositionally biased stretch (polar residues) spans N381–N390. Residues A556–Q571 are compositionally biased toward basic residues.

In terms of assembly, homodimer. Interacts with ASHR3. In terms of tissue distribution, mostly expressed in closed, post-meiotic buds, and, to a lower extent, in pre-meiotic buds. Detected in leaves, stems, and flowers.

The protein localises to the nucleus. Functionally, transcription factor. Plays a crucial role in tapetum development. Required for male fertility and pollen differentiation, especially during the post-meiotic transcriptional regulation of microspore development within the developing anther. Binds E-box regions in the AHL16/TEK promoter. The protein is Transcription factor ABORTED MICROSPORES (AMS) of Arabidopsis thaliana (Mouse-ear cress).